The primary structure comprises 141 residues: Relaxin-3 (141 aa).

Positions 1 to 24 (MAMLGLLLLASWALLGALGLQAEA) are cleaved as a signal peptide. 3 disulfides stabilise this stretch: Cys-34-Cys-128, Cys-46-Cys-141, and Cys-127-Cys-132. Residues 54–117 (ADILAHESLG…GSPGVVRGSR (64 aa)) constitute a propeptide, connecting peptide.

Belongs to the insulin family. As to quaternary structure, heterodimer of a B chain and an A chain linked by two disulfide bonds. As to expression, high expression in the brain localized to the pons/medulla with highest levels in pars ventromedialis of the dorsal tegmental nucleus. Significant expression is also detected in the spleen, thymus, lung, testis and ovary.

Its subcellular location is the secreted. Functionally, may play a role in neuropeptide signaling processes. Ligand for LGR7, relaxin-3 receptor-1 and relaxin-3 receptor-2. The protein is Relaxin-3 (Rln3) of Mus musculus (Mouse).